The following is a 419-amino-acid chain: UDP-N-acetylglucosamine 1-carboxyvinyltransferase (419 aa).

Residue 22 to 23 (KN) coordinates phosphoenolpyruvate. R91 contributes to the UDP-N-acetyl-alpha-D-glucosamine binding site. The active-site Proton donor is C115. C115 is subject to 2-(S-cysteinyl)pyruvic acid O-phosphothioketal. Residues 120–124 (RPVDL), 160–163 (KVSV), D305, and I327 contribute to the UDP-N-acetyl-alpha-D-glucosamine site.

This sequence belongs to the EPSP synthase family. MurA subfamily.

It is found in the cytoplasm. The enzyme catalyses phosphoenolpyruvate + UDP-N-acetyl-alpha-D-glucosamine = UDP-N-acetyl-3-O-(1-carboxyvinyl)-alpha-D-glucosamine + phosphate. The protein operates within cell wall biogenesis; peptidoglycan biosynthesis. In terms of biological role, cell wall formation. Adds enolpyruvyl to UDP-N-acetylglucosamine. In Klebsiella pneumoniae subsp. pneumoniae (strain ATCC 700721 / MGH 78578), this protein is UDP-N-acetylglucosamine 1-carboxyvinyltransferase.